A 459-amino-acid chain; its full sequence is MIIYDSILKQKVEFKPIREYEANIYVCGPTVYDDAHLGHAKSSISFDLLRRTLKSLGYKVKFIKNFTDIDDKILKKMSQTGKSLEDITNHYISRYKADMYALNVADADIEPKATTSLTSIINYITTLFENGWAYKIDDGIYFDTSKDDKYLSLSGRKDENLIARVASKDEKKDEKDFVLWKFDENWYDSPFGRGRPGWHSECVAMIKDHFCGSCEFEIDIHAGGADLLFPHHENEAAQCRCAYNKNLAKYWMHNGFVQVNNEKMSKSLGNSFFIKDALELVPGEALRFYLMSSHYRANFNYDIDDLKSSKKRLDKIYRLKKRLIGVKTSKTDAKFKKDILDAMSDDLNISVALAILDEMVNNANAKLDNEPKNRDFKQILVSNLEFVKELLGILYIDEFKWFQWGVDDSLKQEISVLIDQRNMAKKDKNFILADQIRDKLTNMDISIMDTPNGTMWEKV.

Cys-27 serves as a coordination point for Zn(2+). A 'HIGH' region motif is present at residues Pro-29–His-39. Residues Cys-202, His-231, and Glu-235 each coordinate Zn(2+). Residues Lys-263–Ser-267 carry the 'KMSKS' region motif. Lys-266 lines the ATP pocket.

Belongs to the class-I aminoacyl-tRNA synthetase family. Monomer. Requires Zn(2+) as cofactor.

The protein localises to the cytoplasm. The catalysed reaction is tRNA(Cys) + L-cysteine + ATP = L-cysteinyl-tRNA(Cys) + AMP + diphosphate. This is Cysteine--tRNA ligase from Campylobacter fetus subsp. fetus (strain 82-40).